We begin with the raw amino-acid sequence, 323 residues long: MIDFGKFYQQIACGPLAHWLETLPAQVAAWQRDALHGQFKQWKNSLDNLPALVPDQLDLLHSVSAQSAEPLSDGQRKRIEQLLRTLMPWRKGPFSLYGIDIDTEWRSDLKWDRVLPHITPLAGRTILDVGCGSGYHLWRMVGAGAQLAVGIDPTQLFLCQFEAVRKLLGGDNRAHVLPLGIEQMPALNAFDTVFSMGVLYHRRSPLDHLWQLKDQLVKDGELVLETLVVEGDENTVLVPGERYAQMRNVYFIPSAAALKNWLEKCGFVDVKIADFSVTTVEEQRRTAWMETESLADFLDPHDATKTREGYPAPLRAVLVARKP.

Carboxy-S-adenosyl-L-methionine is bound by residues K91, W105, K110, G130, D152–T154, I181–E182, M196, Y200, and R315.

Belongs to the class I-like SAM-binding methyltransferase superfamily. CmoB family. As to quaternary structure, homotetramer.

It carries out the reaction carboxy-S-adenosyl-L-methionine + 5-hydroxyuridine(34) in tRNA = 5-carboxymethoxyuridine(34) in tRNA + S-adenosyl-L-homocysteine + H(+). Functionally, catalyzes carboxymethyl transfer from carboxy-S-adenosyl-L-methionine (Cx-SAM) to 5-hydroxyuridine (ho5U) to form 5-carboxymethoxyuridine (cmo5U) at position 34 in tRNAs. The polypeptide is tRNA U34 carboxymethyltransferase (Cronobacter sakazakii (strain ATCC BAA-894) (Enterobacter sakazakii)).